Reading from the N-terminus, the 132-residue chain is MADFKIILSDPETGRSYKIDATGPAAGGFVGKRIGDEIDGDVLGFAGYTIKITGATDKTGIPSRRDLPGPSRRRLLLSKGVGFHPVMDGERRRKSVRGNEISADIVQINAAVTQSGAKPLAEYFSQPEAAAE.

This sequence belongs to the eukaryotic ribosomal protein eS6 family.

This Methanoculleus marisnigri (strain ATCC 35101 / DSM 1498 / JR1) protein is Small ribosomal subunit protein eS6.